Here is a 316-residue protein sequence, read N- to C-terminus: uncharacterized protein (316 aa).

The interval 285–316 (APEGDLGDIIEVDPSEPRSDPYRRLRTPPPGG) is disordered. A compositionally biased stretch (acidic residues) spans 289–298 (DLGDIIEVDP).

Its function is as follows. Possibly necessary for replication. This is an uncharacterized protein from Halobacterium salinarum (Halobacterium halobium).